The chain runs to 226 residues: Ribosomal RNA small subunit methyltransferase G (226 aa).

Residues G86, L91, V137–E138, and R150 each bind S-adenosyl-L-methionine.

It belongs to the methyltransferase superfamily. RNA methyltransferase RsmG family.

It is found in the cytoplasm. The enzyme catalyses guanosine(527) in 16S rRNA + S-adenosyl-L-methionine = N(7)-methylguanosine(527) in 16S rRNA + S-adenosyl-L-homocysteine. In terms of biological role, specifically methylates the N7 position of guanine in position 527 of 16S rRNA. The chain is Ribosomal RNA small subunit methyltransferase G from Polaromonas sp. (strain JS666 / ATCC BAA-500).